Reading from the N-terminus, the 415-residue chain is Serine--tRNA ligase (415 aa).

An L-serine-binding site is contributed by 231 to 233 (TAE). 262–264 (RSE) serves as a coordination point for ATP. Glu-285 is a binding site for L-serine. 349 to 352 (EISS) contributes to the ATP binding site. Ser-383 lines the L-serine pocket.

The protein belongs to the class-II aminoacyl-tRNA synthetase family. Type-1 seryl-tRNA synthetase subfamily. Homodimer. The tRNA molecule binds across the dimer.

It is found in the cytoplasm. It carries out the reaction tRNA(Ser) + L-serine + ATP = L-seryl-tRNA(Ser) + AMP + diphosphate + H(+). The enzyme catalyses tRNA(Sec) + L-serine + ATP = L-seryl-tRNA(Sec) + AMP + diphosphate + H(+). The protein operates within aminoacyl-tRNA biosynthesis; selenocysteinyl-tRNA(Sec) biosynthesis; L-seryl-tRNA(Sec) from L-serine and tRNA(Sec): step 1/1. Its function is as follows. Catalyzes the attachment of serine to tRNA(Ser). Is also able to aminoacylate tRNA(Sec) with serine, to form the misacylated tRNA L-seryl-tRNA(Sec), which will be further converted into selenocysteinyl-tRNA(Sec). The chain is Serine--tRNA ligase from Helicobacter acinonychis (strain Sheeba).